The sequence spans 148 residues: Low molecular weight protein-tyrosine-phosphatase Etp (148 aa).

Residue Cys-13 is the Nucleophile of the active site. Arg-19 is an active-site residue. Asp-119 acts as the Proton donor in catalysis.

Belongs to the low molecular weight phosphotyrosine protein phosphatase family.

The enzyme catalyses O-phospho-L-tyrosyl-[protein] + H2O = L-tyrosyl-[protein] + phosphate. In terms of biological role, dephosphorylates etk. The chain is Low molecular weight protein-tyrosine-phosphatase Etp (etp) from Escherichia coli O157:H7.